The chain runs to 315 residues: Protoheme IX farnesyltransferase 1 (315 aa).

Helical transmembrane passes span 25 to 45, 49 to 69, 87 to 107, 120 to 139, 145 to 165, 176 to 196, 220 to 240, 242 to 262, and 280 to 300; these read PGIIFGNLISVAGGFLLAAKG, LALMLASLVGLSLVVASGCAV, RVTVTGEIAVGNVLAFGLALG, ALALLFAVIGYIVYVGVYSL, SVYGTLVGSFSGAVPPVVGYC, AILLLMFSLWQMPHSYAIAIF, LHIVLYIAVFALVSALLPLAG, TGIAFMAVTCATSLWWLAMAL, and GFSIITIMALSITMALDSQVI.

This sequence belongs to the UbiA prenyltransferase family. Protoheme IX farnesyltransferase subfamily.

The protein resides in the cell inner membrane. It carries out the reaction heme b + (2E,6E)-farnesyl diphosphate + H2O = Fe(II)-heme o + diphosphate. The protein operates within porphyrin-containing compound metabolism; heme O biosynthesis; heme O from protoheme: step 1/1. Converts heme B (protoheme IX) to heme O by substitution of the vinyl group on carbon 2 of heme B porphyrin ring with a hydroxyethyl farnesyl side group. The polypeptide is Protoheme IX farnesyltransferase 1 (Shewanella sp. (strain W3-18-1)).